The sequence spans 383 residues: MCASQKNQELIGGLILFSAALLAIVVNNSPLASYYAMLETINVKLGIENLVIDKNLMHWINDGLMAIYFLYIGLEIKREIIVGTLSKPSNIITPAIAAFAGLAMPSLIYLSINHDIKVINGWAIPSATDIAFTLGILALLGTRVPAKLKLLVITIAIFDDIAAIAIIAIFYTKSLSLLSLSLGTLFILAMIICNRIFKINRSSVYVVLGFFAWFCTIKSGVHATLAGFTTALCIPFRENDKDSPANFMEDSLHPWIIYFILPVFAFANAGISFSGISFSILFEPITLGIIWGLFVGKQLGIFSILAVFKKLKWFKLGESFSNLQLYGISLLCGIGFTMSLFIGVLAFNDTHLLNAIKIGVVVGSVLSGFFGYIVLRFIVTNPS.

Helical transmembrane passes span 10–30, 56–76, 91–111, 121–141, 150–170, 174–194, 206–226, 254–274, 289–308, 327–347, and 355–375; these read LIGG…NNSP, LMHW…GLEI, IITP…IYLS, GWAI…ALLG, LLVI…IAIF, SLSL…IICN, VVLG…ATLA, PWII…ISFS, IIWG…LAVF, GISL…VLAF, and AIKI…YIVL.

Belongs to the NhaA Na(+)/H(+) (TC 2.A.33) antiporter family.

The protein resides in the cell inner membrane. It catalyses the reaction Na(+)(in) + 2 H(+)(out) = Na(+)(out) + 2 H(+)(in). Functionally, na(+)/H(+) antiporter that extrudes sodium in exchange for external protons. The sequence is that of Na(+)/H(+) antiporter NhaA from Francisella tularensis subsp. mediasiatica (strain FSC147).